The primary structure comprises 418 residues: eIF5-mimic protein 2 (418 aa).

Residues 1–14 (MNQKQQKPTLSGQR) are compositionally biased toward polar residues. The segment at 1 to 25 (MNQKQQKPTLSGQRFKTRKRDEKER) is disordered. In terms of domain architecture, W2 spans 246–413 (NQQTIGARKE…KNAEEESESE (168 aa)).

This sequence belongs to the BZW family.

Functionally, translation initiation regulator which may repress repeat-associated non-AUG (RAN) initiated translation probably by acting as a competitive inhibitor of eukaryotic translation initiation factor 5 (EIF5) function. Enhances histone H4 gene transcription but does not seem to bind DNA directly. This is eIF5-mimic protein 2 (BZW1) from Gallus gallus (Chicken).